Consider the following 396-residue polypeptide: Flap endonuclease 1 (396 aa).

Residues 1–105 (MGIHGLTKLL…DQLAQRTERR (105 aa)) are N-domain. Asp34 serves as a coordination point for Mg(2+). Arg71 is a binding site for DNA. Asp87, Glu159, Glu161, Asp180, and Asp182 together coordinate Mg(2+). The tract at residues 123–254 (AIEKYSKRSV…VRALQMIKKH (132 aa)) is I-domain. Glu159 is a DNA binding site. Residues Gly232 and Asp234 each contribute to the DNA site. A Mg(2+)-binding site is contributed by Asp234. Residues 338–346 (NQGRLESFF) are interaction with PCNA. The segment at 341 to 396 (RLESFFTSLPKPATADKAKPKEDDKKRKAGAAAGGKDAKGGAAAKKGKFGVGGGKK) is disordered. Positions 354 to 366 (TADKAKPKEDDKK) are enriched in basic and acidic residues. Residues 370 to 384 (GAAAGGKDAKGGAAA) are compositionally biased toward low complexity.

The protein belongs to the XPG/RAD2 endonuclease family. FEN1 subfamily. In terms of assembly, interacts with PCNA. Three molecules of FEN1 bind to one PCNA trimer with each molecule binding to one PCNA monomer. PCNA stimulates the nuclease activity without altering cleavage specificity. Requires Mg(2+) as cofactor. Post-translationally, phosphorylated. Phosphorylation upon DNA damage induces relocalization to the nuclear plasma.

Its subcellular location is the nucleus. It is found in the nucleolus. It localises to the nucleoplasm. The protein localises to the mitochondrion. Its function is as follows. Structure-specific nuclease with 5'-flap endonuclease and 5'-3' exonuclease activities involved in DNA replication and repair. During DNA replication, cleaves the 5'-overhanging flap structure that is generated by displacement synthesis when DNA polymerase encounters the 5'-end of a downstream Okazaki fragment. It enters the flap from the 5'-end and then tracks to cleave the flap base, leaving a nick for ligation. Also involved in the long patch base excision repair (LP-BER) pathway, by cleaving within the apurinic/apyrimidinic (AP) site-terminated flap. Acts as a genome stabilization factor that prevents flaps from equilibrating into structures that lead to duplications and deletions. Also possesses 5'-3' exonuclease activity on nicked or gapped double-stranded DNA, and exhibits RNase H activity. Also involved in replication and repair of rDNA and in repairing mitochondrial DNA. This Chlamydomonas reinhardtii (Chlamydomonas smithii) protein is Flap endonuclease 1.